Reading from the N-terminus, the 345-residue chain is Green-sensitive opsin (345 aa).

Residues 1-37 (MENGTEGKNFYIPMNNRTGLVRSPYEYPQYYLADPWQ) are Extracellular-facing. Asn3 and Asn16 each carry an N-linked (GlcNAc...) asparagine glycan. The chain crosses the membrane as a helical span at residues 38-62 (FKLLGIYMFFLILTGFPINALTLVV). At 63–74 (TAQNKKLRQPLN) the chain is on the cytoplasmic side. The chain crosses the membrane as a helical span at residues 75-100 (FILVNLAVAGLIMVCFGFTVCIYSCM). Residues 101-114 (VGYFSLGPLGCTIE) are Extracellular-facing. A disulfide bridge connects residues Cys111 and Cys188. A helical membrane pass occupies residues 115-134 (GFMATLGGQVSLWSLVVLAI). The Cytoplasmic segment spans residues 135 to 153 (ERYIVVCKPMGSFKFTATH). A helical membrane pass occupies residues 154–177 (SAAGCAFTWIMASSCAVPPLVGWS). The Extracellular portion of the chain corresponds to 178–203 (RYIPEGIQVSCGPDYYTLAPGFNNES). A glycan (N-linked (GlcNAc...) asparagine) is linked at Asn201. Residues 204 to 231 (FVMYMFSCHFCVPVFTIFFTYGSLVMTV) traverse the membrane as a helical segment. Topologically, residues 232–253 (KAAAAQQQDSASTQKAEKEVTR) are cytoplasmic. A helical transmembrane segment spans residues 254 to 277 (MCFLMVLGFLLAWVPYASYAAWIF). Residues 278 to 285 (FNRGAAFS) lie on the Extracellular side of the membrane. The chain crosses the membrane as a helical span at residues 286-310 (AMSMAIPSFFSKSSALFNPIIYILL). Lys297 is modified (N6-(retinylidene)lysine). Residues 311–345 (NKQFRNCMLATIGMGGMVEDETSVSTSKTEVSTAA) are Cytoplasmic-facing.

The protein belongs to the G-protein coupled receptor 1 family. Opsin subfamily. Phosphorylated on some or all of the serine and threonine residues present in the C-terminal region. In terms of tissue distribution, the color pigments are found in the cone photoreceptor cells.

It is found in the membrane. In terms of biological role, visual pigments are the light-absorbing molecules that mediate vision. They consist of an apoprotein, opsin, covalently linked to cis-retinal. This is Green-sensitive opsin from Oryzias latipes (Japanese rice fish).